Here is a 400-residue protein sequence, read N- to C-terminus: Phosphoglycerate kinase (400 aa).

Substrate-binding positions include 23–25 (DLN), R38, 61–64 (HFGR), R120, and R153. ATP is bound by residues K203, E325, and 355-358 (GGDT).

The protein belongs to the phosphoglycerate kinase family. In terms of assembly, monomer.

Its subcellular location is the cytoplasm. The enzyme catalyses (2R)-3-phosphoglycerate + ATP = (2R)-3-phospho-glyceroyl phosphate + ADP. The protein operates within carbohydrate degradation; glycolysis; pyruvate from D-glyceraldehyde 3-phosphate: step 2/5. This Methylobacterium radiotolerans (strain ATCC 27329 / DSM 1819 / JCM 2831 / NBRC 15690 / NCIMB 10815 / 0-1) protein is Phosphoglycerate kinase.